Consider the following 478-residue polypeptide: Transcript termination protein A18 (478 aa).

A Helicase ATP-binding domain is found at 98-254; that stretch reads KVELKRPMYV…NDVINVSNSS (157 aa). 111–118 contacts ATP; sequence LACGFGKT. The short motif at 204-207 is the DESH box element; that stretch reads DESH. The Helicase C-terminal domain occupies 307–454; it reads ILDTIIYDFE…IITLAIEKLG (148 aa).

The protein belongs to the helicase family. Poxviruses subfamily. In terms of assembly, interacts with G2. Might be part of a transcription complex composed at least of G2, A18, and H5.

Its subcellular location is the virion. DNA helicase which seems to act as a postreplicative transcription termination factor. Involved in ATP-dependent release of nascent RNA. Forms a stable complex with single-stranded DNA, and to a lesser extent RNA. The chain is Transcript termination protein A18 from Erythrocebus patas (Red guenon).